The chain runs to 109 residues: Preprofallaxidin-8 (109 aa).

The first 22 residues, 1–22, serve as a signal peptide directing secretion; sequence MASLKKSLFLVLFLGLLSLSIC. Residues 23–46 constitute a propeptide that is removed on maturation; that stretch reads EEQKRENEEDAEDENHEEESEEKR. The tract at residues 27-46 is disordered; the sequence is RENEEDAEDENHEEESEEKR. Residues 30 to 42 show a composition bias toward acidic residues; sequence EEDAEDENHEEES. Position 62 is a leucine amide (Leu62). Positions 66 to 70 are excised as a propeptide; the sequence is SEEKR. Position 75 is a methionine amide (Met75). Positions 79-83 are excised as a propeptide; that stretch reads SEEKR. Met88 carries the post-translational modification Methionine amide. Propeptides lie at residues 92-96 and Ala108; that span reads SEEKR.

The protein belongs to the frog skin active peptide (FSAP) family. Brevinin subfamily. Expressed by the skin glands.

It localises to the secreted. Fallaxidin-2.1 shows no antibacterial activity against Gram-positive or Gram-negative bacteria. Does not inhibit the formation of NO by neuronal nitric oxide synthase. Has no effect on splenocyte proliferation or smooth muscle contraction. Functionally, fallaxidin-3.2 shows antibacterial activity against the Gram-positive bacteria E.faecalis (MIC=100 uM) and L.lactis (MIC=500 uM). No antibacterial activity against the Gram-positive bacteria B.cereus, L.innocua, M.luteus, S.epidermidis, S.uberis and S.aureus, or the Gram-negative bacteria E.cloacae and E.coli. This Litoria fallax (Eastern dwarf tree frog) protein is Preprofallaxidin-8.